The chain runs to 816 residues: Protein kinase C-binding protein NELL2 (816 aa).

Positions 1–21 (MESRVLLRTFCLIFGLGAVWG) are cleaved as a signal peptide. N-linked (GlcNAc...) asparagine glycans are attached at residues Asn53, Asn225, Asn293, and Asn298. The Laminin G-like domain occupies 64-228 (PRSIKASTAT…AQCPDLNRTC (165 aa)). Positions 272–331 (RTCTMKGTTYREFESWIDGCKNCTCLNGTIQCETLICPNPDCPLKSALAYVDGKCCKECK) constitute a VWFC 1 domain. The EGF-like 1 domain occupies 397–439 (GYDFCSERHNCMENSICRNLNDRAVCSCRDGFRALREDNAYCE). 3 disulfide bridges follow: Cys401–Cys413, Cys407–Cys422, and Cys424–Cys438. Ca(2+) is bound by residues Asp440, Ile441, and Glu443. The EGF-like 2; calcium-binding domain occupies 440–481 (DIDECAEGRHYCRENTMCVNTPGSFMCICKTGYIRIDDYSCT). Disulfide bonds link Cys444–Cys457, Cys451–Cys466, Cys468–Cys480, Cys486–Cys499, Cys493–Cys508, Cys510–Cys521, Cys525–Cys535, Cys529–Cys541, and Cys543–Cys552. Asn459, Thr460, and Ser463 together coordinate Ca(2+). The region spanning 482–522 (EHDECITNQHNCDENALCFNTVGGHNCVCKPGYTGNGTTCK) is the EGF-like 3; calcium-binding domain. An N-linked (GlcNAc...) asparagine glycan is attached at Asn517. The 31-residue stretch at 523-553 (AFCKDGCRNGGACIAANVCACPQGFTGPSCE) folds into the EGF-like 4 domain. Thr548 is a glycosylation site (O-linked (GlcNAc...) threonine). The Ca(2+) site is built by Asp555, Ile556, and Glu558. In terms of domain architecture, EGF-like 5; calcium-binding spans 555–601 (DIDECSDGFVQCDSRANCINLPGWYHCECRDGYHDNGMFSPSGESCE). 3 cysteine pairs are disulfide-bonded: Cys559/Cys572, Cys566/Cys581, and Cys583/Cys600. Positions 574, 575, and 578 each coordinate Ca(2+). 3 residues coordinate Ca(2+): Asp602, Ile603, and Glu605. The EGF-like 6; calcium-binding domain occupies 602–637 (DIDECGTGRHSCANDTICFNLDGGYDCRCPHGKNCT). Disulfide bonds link Cys606/Cys619, Cys613/Cys628, and Cys630/Cys636. An N-linked (GlcNAc...) asparagine glycan is attached at Asn615. The Ca(2+) site is built by Asn621, Leu622, and Gly625. Asn635 carries an N-linked (GlcNAc...) asparagine glycan. VWFC domains lie at 638–693 (GDCI…PECD) and 698–756 (SQCL…PRCV).

As to quaternary structure, homotrimer. Binds to PRKCB. Interacts with NICOL1; this interaction triggers epididymal differentiation. Interacts (via the EGF domains) with ROBO3 (via Fibronectin type-III 1 domain) with a 3:3 stoichiometry; this interaction promotes oligomerization of ROBO3 resulting in the repulsion of commissural axons in the midline.

The protein resides in the secreted. In terms of biological role, plays multiple roles in neural tissues, regulates neuronal proliferation, survival, differentiation, polarization, as well as axon guidance and synaptic functions. Plays an important role in axon development during neuronal differentiation through the MAPK intracellular signaling pathway. Via binding to its receptor ROBO3, plays a role in axon guidance, functioning as a repulsive axon guidance cue that contributes to commissural axon guidance to the midline. Required for neuron survival through the modulation of MAPK signaling pathways too. Involved in the regulation of hypothalamic GNRH secretion and the control of puberty. Functionally, epididymal-secreted protein that signals through a ROS1-pathway to regulate the epididymal initial segment (IS) maturation, sperm maturation and male fertility. The polypeptide is Protein kinase C-binding protein NELL2 (Homo sapiens (Human)).